Here is a 553-residue protein sequence, read N- to C-terminus: MGSRPFTKNPAPMMLTIRVALVLSCICPANSIDGRPFAAAGIVVTGDKAVNIYTSSQTGSIIVKLLPNLPKDKEACAKAPLDAYNRTLTTLLTPLGDSIRRIQESVTTSGGGRQGRLIGAIIGGVALGVATAAQITAAAALIQAKQNAANILRLKESIAATNEAVHEVTDGLSQLAVAVGKMQQFVNDQFNKTAQELDCIKIAQQVGVELNLYLTELTTVFGPQITSPALNKLTIQALYNLAGGNMDYLLTKLGIGNNQLSSLIGSGLITGNPILYDSQTQLLGIQVTLPSVGNLNNMRATYLETLSVSTTRGFASALVPKVVTQVGSVIEELDTSYCIETDLDLYCTRIVTFPMSPGIYSCLSGNTSACMYSKTEGALTTPYMTIKGSVIANCKMTTCRCVNPPGIISQNYGEAVSLIDKQSCNVLSLGGITLRLSGEFDVTYQKNISIQDSQVIITGNLDISTELGNVNNSISNALNKLEESNRKLDKVNVKLTSTSALITYIVLTIISLVFGILSLILACYLMYKQKAQQKTLLWLGNNTLDQMRATTKM.

The signal sequence occupies residues 1-31 (MGSRPFTKNPAPMMLTIRVALVLSCICPANS). Residues 31–500 (SIDGRPFAAA…VNVKLTSTSA (470 aa)) are Extracellular-facing. 5 cysteine pairs are disulfide-bonded: cysteine 76–cysteine 199, cysteine 338–cysteine 347, cysteine 362–cysteine 370, cysteine 394–cysteine 399, and cysteine 401–cysteine 424. Asparagine 85 and asparagine 191 each carry an N-linked (GlcNAc...) asparagine; by host glycan. Asparagine 366 carries N-linked (GlcNAc...) asparagine; by host glycosylation. Asparagine 447 and asparagine 471 each carry an N-linked (GlcNAc...) asparagine; by host glycan. A coiled-coil region spans residues 463–499 (ISTELGNVNNSISNALNKLEESNRKLDKVNVKLTSTS). The helical transmembrane segment at 501-521 (LITYIVLTIISLVFGILSLIL) threads the bilayer. Residues 522 to 553 (ACYLMYKQKAQQKTLLWLGNNTLDQMRATTKM) are Cytoplasmic-facing. Cysteine 523 carries S-palmitoyl cysteine; by host lipidation.

The protein belongs to the paramyxoviruses fusion glycoprotein family. Homotrimer of disulfide-linked F1-F2. The inactive precursor F0 is glycosylated and proteolytically cleaved into F1 and F2 to be functionally active. The cleavage is mediated by cellular proteases during the transport and maturation of the polypeptide.

It is found in the virion membrane. The protein resides in the host cell membrane. In terms of biological role, class I viral fusion protein. Under the current model, the protein has at least 3 conformational states: pre-fusion native state, pre-hairpin intermediate state, and post-fusion hairpin state. During viral and plasma cell membrane fusion, the heptad repeat (HR) regions assume a trimer-of-hairpins structure, positioning the fusion peptide in close proximity to the C-terminal region of the ectodomain. The formation of this structure appears to drive apposition and subsequent fusion of viral and plasma cell membranes. Directs fusion of viral and cellular membranes leading to delivery of the nucleocapsid into the cytoplasm. This fusion is pH independent and occurs directly at the outer cell membrane. The trimer of F1-F2 (F protein) probably interacts with HN at the virion surface. Upon HN binding to its cellular receptor, the hydrophobic fusion peptide is unmasked and interacts with the cellular membrane, inducing the fusion between cell and virion membranes. Later in infection, F proteins expressed at the plasma membrane of infected cells could mediate fusion with adjacent cells to form syncytia, a cytopathic effect that could lead to tissue necrosis. This Gallus gallus (Chicken) protein is Fusion glycoprotein F0 (F).